The sequence spans 203 residues: Holliday junction branch migration complex subunit RuvA (203 aa).

The tract at residues 1–63 is domain I; the sequence is MIVSLRGTVE…EESQTLYGFT (63 aa). The segment at 64–142 is domain II; the sequence is DDASRRMFVL…GFNDGIPAAA (79 aa). Positions 143 to 150 are flexible linker; that stretch reads QPQLSIAV. Positions 150-203 are domain III; that stretch reads VDQAVQEQVLEALVGLGFSEKIALPVLSRVLRDSPELSKSQALRAALSELGTKN.

Belongs to the RuvA family. In terms of assembly, homotetramer. Forms an RuvA(8)-RuvB(12)-Holliday junction (HJ) complex. HJ DNA is sandwiched between 2 RuvA tetramers; dsDNA enters through RuvA and exits via RuvB. An RuvB hexamer assembles on each DNA strand where it exits the tetramer. Each RuvB hexamer is contacted by two RuvA subunits (via domain III) on 2 adjacent RuvB subunits; this complex drives branch migration. In the full resolvosome a probable DNA-RuvA(4)-RuvB(12)-RuvC(2) complex forms which resolves the HJ.

It is found in the cytoplasm. Functionally, the RuvA-RuvB-RuvC complex processes Holliday junction (HJ) DNA during genetic recombination and DNA repair, while the RuvA-RuvB complex plays an important role in the rescue of blocked DNA replication forks via replication fork reversal (RFR). RuvA specifically binds to HJ cruciform DNA, conferring on it an open structure. The RuvB hexamer acts as an ATP-dependent pump, pulling dsDNA into and through the RuvAB complex. HJ branch migration allows RuvC to scan DNA until it finds its consensus sequence, where it cleaves and resolves the cruciform DNA. The protein is Holliday junction branch migration complex subunit RuvA of Corynebacterium diphtheriae (strain ATCC 700971 / NCTC 13129 / Biotype gravis).